Consider the following 1024-residue polypeptide: Protein tiptop (1024 aa).

Residues 20–35 (ELTSPRCQSRDSNTSA) are compositionally biased toward polar residues. 2 disordered regions span residues 20–40 (ELTSPRCQSRDSNTSAGAGAG) and 138–215 (EGEV…ISAD). The segment covering 159-175 (DDQEEDQEQDQEQEQEQ) has biased composition (acidic residues). The segment at 317-341 (FKCVWCKQSFSTLANLTAHMKETQH) adopts a C2H2-type 1 zinc-finger fold. The tract at residues 350–392 (LPTGGVGTPSAPPPTRLATSASNSACSSSSSSTSSSSNSSKSE) is disordered. Low complexity predominate over residues 368–391 (TSASNSACSSSSSSTSSSSNSSKS). The segment at 426-450 (LKCMWCGQSFRSLAEMTSHMQETQH) adopts a C2H2-type 2 zinc-finger fold. Disordered regions lie at residues 466 to 489 (GDERERPTNTGVPSTSTAAPSSPS), 519 to 576 (AQKS…SLDS), 712 to 759 (SRDR…IKAE), 786 to 818 (FSMEACRESPRSVSKSPAPQTERSPPDNGSLLA), and 868 to 891 (ETTDPPSTGLRSASSAGSSTASAT). Low complexity predominate over residues 477–489 (VPSTSTAAPSSPS). A C2H2-type 3 zinc finger spans residues 499–523 (LTCKVCDQAFGSLKELSTHMAQKSH). Positions 527-537 (SPAPSASPPAA) are enriched in low complexity. A compositionally biased stretch (basic residues) spans 543-558 (KRGRQNRNEKRKKSLP). Residues 718 to 729 (SESSSASRVESS) are compositionally biased toward low complexity. The segment covering 745–755 (TPAPPPPPPPT) has biased composition (pro residues). Residues 786-795 (FSMEACRESP) are compositionally biased toward basic and acidic residues. Residues 796-808 (RSVSKSPAPQTER) are compositionally biased toward polar residues. Low complexity predominate over residues 874–891 (STGLRSASSAGSSTASAT). The C2H2-type 4 zinc-finger motif lies at 926 to 949 (IKCSYCDTPFASKGAYRHHLSKVH). Positions 954-1004 (AGEDSPRLKSPAVQSPRSMPLASPRRSASRSPATGSQQPPPSPTISPYDES) are disordered. Low complexity predominate over residues 968 to 990 (SPRSMPLASPRRSASRSPATGSQ).

The protein belongs to the teashirt C2H2-type zinc-finger protein family. In terms of tissue distribution, expression in the Malpighian tubules (MTs) and stomatogastric nervous system starts at embryonic stage 10. At stage 11, expression in the head domain is initiated in the clypeolabrum in two bilaterally symmetric clusters of cells. At stage 12, expression appears in the central nervous system (CNS) of the trunk and the epidermis. The staining in the hindgut is maintained throughout embryogenesis. At stage 13, expression is present in elongating MTs. The anterior staining is detected in cells that invaginate into the stomodeum and by stage 15 onwards, in cells close to the pharynx. Also expressed in cells of the brain, the second constriction of the gut, the trunk epidermis, the anterior segments of the CNS (the three thoracic and the first two abdominal segments) and in the MTs. From stage 12 onwards, tsh and tio are colocalized in some cells.

The protein localises to the nucleus. Tiptop (tio) and teashirt (tsh) have, on the whole, common activities. Tio and tsh repress each other's expression and tsh has a crucial role for trunk patterning that is in part masked by ectopic expression of tiptop. Both genes share a common activity required for the activation of Ser and svb and the maintenance of en and wg. The polypeptide is Protein tiptop (tio) (Drosophila melanogaster (Fruit fly)).